Consider the following 201-residue polypeptide: Dephospho-CoA kinase (201 aa).

The 199-residue stretch at 3-201 folds into the DPCK domain; that stretch reads WIGLTGGIAC…KWLEELKNQN (199 aa). 11–16 provides a ligand contact to ATP; sequence ACGKST.

This sequence belongs to the CoaE family.

The protein resides in the cytoplasm. The catalysed reaction is 3'-dephospho-CoA + ATP = ADP + CoA + H(+). Its pathway is cofactor biosynthesis; coenzyme A biosynthesis; CoA from (R)-pantothenate: step 5/5. Catalyzes the phosphorylation of the 3'-hydroxyl group of dephosphocoenzyme A to form coenzyme A. The chain is Dephospho-CoA kinase from Bdellovibrio bacteriovorus (strain ATCC 15356 / DSM 50701 / NCIMB 9529 / HD100).